The primary structure comprises 468 residues: MAPISRETDFLVIGGGSGGIATARAAAGKYGIKSMVVEGKRLGGTCVNVGCVPKKVTFYAALVAETIHQAKDYGFSVEQTAPFDWPTFKQKRDAYVARLNGIYERNLANDKVEYVHGWAKLLSPNSVEVTLDDGTKSVVNAKKILIAVGGNPTIPPHIPGSEYGTNSDGFFDIDTLPKKVALVGAGYIAVEFAGMLNALGVETHLFIRHDTFLRSFDPMIQQVSVKEYERIGVKVHKKSQLTSVQKDAAGKLAINFKEGEGEQSISDVDHLIWAVGRTPAVEGLGLDKAGVKTNEKGYIEVDEYQNTSTENIYAVGDVCGQVELTPVAIAAGRKLAARLFGPEEFRTLKLNYDNVPSVVFAHPEIGSIGLTEPEAVAKYGAENLKIYKSSFTAMYYAMMKPEDKAPTAYKLICAGPEEKVVGLHIIGLGSGEILQGFGVAVNMGATKADFDNCVAIHPTSAEELVTLK.

The FAD site is built by S17 and G18. S17 contacts glutathione. Glutathione is bound at residue R24. The FAD site is built by E38, T45, C46, and K54. C46 and C51 form a disulfide bridge. Y103 contacts glutathione. A119 provides a ligand contact to FAD. Residues A185, I188, E191, R208, R214, and G276 each contribute to the NADP(+) site. D317 is an FAD binding site. Residue E323 participates in NADP(+) binding. An FAD-binding site is contributed by T325. R333 serves as a coordination point for glutathione. NADP(+) is bound at residue V358. Residue K410 participates in glutathione binding. Residue H457 coordinates FAD. The active-site Proton acceptor is the H457.

This sequence belongs to the class-I pyridine nucleotide-disulfide oxidoreductase family. In terms of assembly, homodimer. Requires FAD as cofactor.

The protein resides in the cytoplasm. Its subcellular location is the mitochondrion. The catalysed reaction is 2 glutathione + NADP(+) = glutathione disulfide + NADPH + H(+). In terms of biological role, catalyzes the reduction of glutathione disulfide (GSSG) to reduced glutathione (GSH). Constitutes the major mechanism to maintain a high GSH:GSSG ratio in the cytosol. The polypeptide is Glutathione reductase (gtr-1) (Neurospora crassa (strain ATCC 24698 / 74-OR23-1A / CBS 708.71 / DSM 1257 / FGSC 987)).